Consider the following 232-residue polypeptide: Ubiquitin carboxyl-terminal hydrolase UCHL3 (232 aa).

One can recognise a UCH catalytic domain in the interval 6–225 (IWTPLESNPD…LRFSALAVIP (220 aa)). Residues 10–14 (LESNP) form an interaction with ubiquitin region. C92 functions as the Nucleophile in the catalytic mechanism. The crossover loop which restricts access of large ubiquitin adducts to the active site stretch occupies residues 151–159 (QVENRDDIL). Residues 163-165 (THF) form an interaction with ubiquitin region. Residue H164 is the Proton donor of the active site.

Belongs to the peptidase C12 family.

The enzyme catalyses Thiol-dependent hydrolysis of ester, thioester, amide, peptide and isopeptide bonds formed by the C-terminal Gly of ubiquitin (a 76-residue protein attached to proteins as an intracellular targeting signal).. Its function is as follows. Thiol protease that recognizes and hydrolyzes a peptide bond at the C-terminal glycine of either ubiquitin or NEDD8. Essential for parasite blood stage survival. The protein is Ubiquitin carboxyl-terminal hydrolase UCHL3 of Plasmodium falciparum (isolate 3D7).